Consider the following 505-residue polypeptide: Monocarboxylate transporter 6 (505 aa).

Residues 1 to 17 (MPQALERADGSWAWVVL) are Cytoplasmic-facing. The chain crosses the membrane as a helical span at residues 18–38 (LATMVTQGLTLGFPTCIGIFF). Residues 39–53 (TELQWEFQASNSETS) are Extracellular-facing. A helical transmembrane segment spans residues 54-74 (WFPSILTAVLHMAGPLCSILV). Residues 75–80 (GRFGCR) lie on the Cytoplasmic side of the membrane. The helical transmembrane segment at 81–101 (VTVMLGGVLASLGMVASSFSH) threads the bilayer. Residues 102–110 (NLSQLYFTA) lie on the Extracellular side of the membrane. A helical membrane pass occupies residues 111–131 (GFITGLGMCFSFQSSITVLGF). Topologically, residues 132–137 (YFVRRR) are cytoplasmic. A helical membrane pass occupies residues 138–158 (VLANALASMGVSLGITLWPLL). Topologically, residues 159 to 171 (SRYLLENLGWRGT) are extracellular. Residues 172-192 (FLVFGGIFLHCCICGAIIRPV) traverse the membrane as a helical segment. Topologically, residues 193–239 (ATSVAPETKECPPPPPETPALGCLAACGRTIQRHLAFDILRHNTGYC) are cytoplasmic. A helical transmembrane segment spans residues 240 to 260 (VYILGVMWSVLGFPLPQVFLV). Over 261 to 274 (PYAMWHSVDEQQAA) the chain is Extracellular. A helical transmembrane segment spans residues 275–295 (LLISIIGFSNIFLRPLAGLMA). Residues 296–305 (GRPAFASHRK) are Cytoplasmic-facing. The chain crosses the membrane as a helical span at residues 306–326 (YLFSLALLLNGLTNLVCAASG). At 327–329 (DFW) the chain is on the extracellular side. The chain crosses the membrane as a helical span at residues 330–350 (VLVGYCLAYSVSMSGIGALIF). Topologically, residues 351–367 (QVLMDIVPMDQFPRALG) are cytoplasmic. Residues 368–388 (LFTVLDGLAFLISPPLAGLLL) form a helical membrane-spanning segment. The Extracellular portion of the chain corresponds to 389-396 (DATNNFSY). Residues 397 to 417 (VFYMSSFFLISAALFMGGSFY) form a helical membrane-spanning segment. Residues 418–505 (ALQKKEQGKQ…QTALGWNSPT (88 aa)) are Cytoplasmic-facing. The segment at 443 to 464 (KDGPGKQRSPEIMCQSSRQPRP) is disordered.

It belongs to the major facilitator superfamily. Monocarboxylate porter (TC 2.A.1.13) family. Highly expressed in kidney.

The protein resides in the cell membrane. Proton-linked monocarboxylate transporter. Catalyzes the rapid transport across the plasma membrane of many monocarboxylates such as lactate, pyruvate, branched-chain oxo acids derived from leucine, valine and isoleucine, and the ketone bodies acetoacetate, beta-hydroxybutyrate and acetate. The polypeptide is Monocarboxylate transporter 6 (SLC16A5) (Homo sapiens (Human)).